Consider the following 201-residue polypeptide: Large ribosomal subunit protein bL25 (201 aa).

Belongs to the bacterial ribosomal protein bL25 family. CTC subfamily. In terms of assembly, part of the 50S ribosomal subunit; part of the 5S rRNA/L5/L18/L25 subcomplex. Contacts the 5S rRNA. Binds to the 5S rRNA independently of L5 and L18.

In terms of biological role, this is one of the proteins that binds to the 5S RNA in the ribosome where it forms part of the central protuberance. This is Large ribosomal subunit protein bL25 from Akkermansia muciniphila (strain ATCC BAA-835 / DSM 22959 / JCM 33894 / BCRC 81048 / CCUG 64013 / CIP 107961 / Muc).